Reading from the N-terminus, the 466-residue chain is 3-isopropylmalate dehydratase large subunit (466 aa).

3 residues coordinate [4Fe-4S] cluster: Cys347, Cys407, and Cys410.

This sequence belongs to the aconitase/IPM isomerase family. LeuC type 1 subfamily. Heterodimer of LeuC and LeuD. [4Fe-4S] cluster is required as a cofactor.

The enzyme catalyses (2R,3S)-3-isopropylmalate = (2S)-2-isopropylmalate. It functions in the pathway amino-acid biosynthesis; L-leucine biosynthesis; L-leucine from 3-methyl-2-oxobutanoate: step 2/4. In terms of biological role, catalyzes the isomerization between 2-isopropylmalate and 3-isopropylmalate, via the formation of 2-isopropylmaleate. This chain is 3-isopropylmalate dehydratase large subunit, found in Pectobacterium carotovorum subsp. carotovorum (strain PC1).